The primary structure comprises 156 residues: ATP synthase subunit b (156 aa).

Residues 5–25 traverse the membrane as a helical segment; the sequence is LTLIGQAIAFAFFVAFCMKFV.

This sequence belongs to the ATPase B chain family. As to quaternary structure, F-type ATPases have 2 components, F(1) - the catalytic core - and F(0) - the membrane proton channel. F(1) has five subunits: alpha(3), beta(3), gamma(1), delta(1), epsilon(1). F(0) has three main subunits: a(1), b(2) and c(10-14). The alpha and beta chains form an alternating ring which encloses part of the gamma chain. F(1) is attached to F(0) by a central stalk formed by the gamma and epsilon chains, while a peripheral stalk is formed by the delta and b chains.

The protein resides in the cell inner membrane. F(1)F(0) ATP synthase produces ATP from ADP in the presence of a proton or sodium gradient. F-type ATPases consist of two structural domains, F(1) containing the extramembraneous catalytic core and F(0) containing the membrane proton channel, linked together by a central stalk and a peripheral stalk. During catalysis, ATP synthesis in the catalytic domain of F(1) is coupled via a rotary mechanism of the central stalk subunits to proton translocation. In terms of biological role, component of the F(0) channel, it forms part of the peripheral stalk, linking F(1) to F(0). The polypeptide is ATP synthase subunit b (Acinetobacter baumannii (strain AYE)).